The sequence spans 508 residues: ATP synthase subunit alpha (508 aa).

Position 169–176 (169–176) interacts with ATP; the sequence is GDRGTGKS.

This sequence belongs to the ATPase alpha/beta chains family. F-type ATPases have 2 components, CF(1) - the catalytic core - and CF(0) - the membrane proton channel. CF(1) has five subunits: alpha(3), beta(3), gamma(1), delta(1), epsilon(1). CF(0) has three main subunits: a(1), b(2) and c(9-12). The alpha and beta chains form an alternating ring which encloses part of the gamma chain. CF(1) is attached to CF(0) by a central stalk formed by the gamma and epsilon chains, while a peripheral stalk is formed by the delta and b chains.

Its subcellular location is the cell membrane. The enzyme catalyses ATP + H2O + 4 H(+)(in) = ADP + phosphate + 5 H(+)(out). Functionally, produces ATP from ADP in the presence of a proton gradient across the membrane. The alpha chain is a regulatory subunit. This Natranaerobius thermophilus (strain ATCC BAA-1301 / DSM 18059 / JW/NM-WN-LF) protein is ATP synthase subunit alpha.